The sequence spans 822 residues: AP-1 complex subunit gamma-1 (822 aa).

Residues 597-628 (EIVQTNGETEPAPLETKPPPSGPQPTSQANDL) are disordered. In terms of domain architecture, GAE spans 702–817 (AGIPSITAYS…QDLAEVNNFP (116 aa)).

This sequence belongs to the adaptor complexes large subunit family. As to quaternary structure, adaptor protein complex 1 (AP-1) is a heterotetramer composed of two large adaptins (gamma-type subunit AP1G1 and beta-type subunit AP1B1), a medium adaptin (mu-type subunit AP1M1 or AP1M2) and a small adaptin (sigma-type subunit AP1S1 or AP1S2 or AP1S3). Interacts (via GAE domain) with RABEP1. Interacts with SYNRG/gamma-synergin. Interacts with EPS15. Interacts (via GAE domain) with AP1AR (via coiled-coil domain). Interacts with CLN3 (via dileucine motif); this interaction facilitates lysosomal targeting. Interacts (via GAE domain) with AFTPH/aftiphilin; the interaction is required to recruit AFTPH/aftiphilin to the perinuclear region of the cell. Widely expressed.

The protein localises to the golgi apparatus. It localises to the cytoplasmic vesicle. It is found in the clathrin-coated vesicle membrane. Its subcellular location is the cytoplasm. The protein resides in the perinuclear region. The protein localises to the clathrin-coated vesicle. It localises to the membrane. It is found in the clathrin-coated pit. Functionally, subunit of clathrin-associated adaptor protein complex 1 that plays a role in protein sorting in the late-Golgi/trans-Golgi network (TGN) and/or endosomes. The AP complexes mediate both the recruitment of clathrin to membranes and the recognition of sorting signals within the cytosolic tails of transmembrane cargo molecules. In association with AFTPH/aftiphilin in the aftiphilin/p200/gamma-synergin complex, involved in the trafficking of transferrin from early to recycling endosomes, and the membrane trafficking of furin and the lysosomal enzyme cathepsin D between the trans-Golgi network (TGN) and endosomes. This is AP-1 complex subunit gamma-1 (AP1G1) from Homo sapiens (Human).